Reading from the N-terminus, the 330-residue chain is DNA-directed RNA polymerase I subunit RPA43 (330 aa).

The disordered stretch occupies residues 251 to 330 (ADVTDVTPQE…ANFESPKKRQ (80 aa)). Residues serine 306, serine 318, and serine 325 each carry the phosphoserine modification. The segment covering 317-330 (HSEEANFESPKKRQ) has biased composition (basic and acidic residues).

This sequence belongs to the eukaryotic RPA43 RNA polymerase subunit family. As to quaternary structure, component of the RNA polymerase I (Pol I) complex consisting of 13 subunits: a ten-subunit catalytic core composed of POLR1A/RPA1, POLR1B/RPA2, POLR1C/RPAC1, POLR1D/RPAC2, POLR1H/RPA12, POLR2E/RPABC1, POLR2F/RPABC2, POLR2H/RPABC3, POLR2K/RPABC4 and POLR2L/RPABC5; a mobile stalk subunit POLR1F/RPA43 protruding from the core and additional subunits homologous to general transcription factors POLR1E/RPA49 and POLR1G/RPA34. Interacts with RRN3/TIF-IA. Interacts with RRN3/TIF-IA. In terms of tissue distribution, widely expressed.

The protein localises to the nucleus. It is found in the nucleolus. Component of RNA polymerase I (Pol I), a DNA-dependent RNA polymerase which synthesizes ribosomal RNA precursors using the four ribonucleoside triphosphates as substrates. Through its association with RRN3/TIF-IA may be involved in recruitment of Pol I to rDNA promoters. The chain is DNA-directed RNA polymerase I subunit RPA43 from Mus musculus (Mouse).